We begin with the raw amino-acid sequence, 549 residues long: Undecaprenyl phosphate-alpha-4-amino-4-deoxy-L-arabinose arabinosyl transferase 1 (549 aa).

12 helical membrane-spanning segments follow: residues 9–29 (LLLIAFGLFYLLPLATHGLWI), 80–102 (LFGVRVASALSTGLSVVLAYLLA), 112–132 (SLASALLYMSFTVVALQAGYA), 133–153 (NLDPQFTFWVNLSLVALWFTF), 176–196 (FMTKGFLAWLLPVLVALPYAI), 204–224 (LLIYGGIGVLVAILISLPWAL), 257–277 (WWYYLPLLVGFSVPWVLLLPA), 290–310 (SSGFLLLWLVLPLAFFSLSKG), 312–332 (LPAYILPCLLPLALLMGNTLV), 342–362 (LLAFNGVLNLVAGLLGLLALV), 377–397 (HLVLVYVLLLGWILSNLLQAM), and 402–422 (LWAAPALGSFLLVALAPAALP).

It belongs to the glycosyltransferase 83 family.

It localises to the cell inner membrane. It catalyses the reaction 4-amino-4-deoxy-alpha-L-arabinopyranosyl di-trans,octa-cis-undecaprenyl phosphate + lipid IVA = lipid IIA + di-trans,octa-cis-undecaprenyl phosphate.. The protein operates within lipopolysaccharide metabolism; 4-amino-4-deoxy-beta-L-arabinose-lipid A biosynthesis. Functionally, catalyzes the transfer of the L-Ara4N moiety of the glycolipid undecaprenyl phosphate-alpha-L-Ara4N to lipid A. The modified arabinose is attached to lipid A and is required for resistance to polymyxin and cationic antimicrobial peptides. This is Undecaprenyl phosphate-alpha-4-amino-4-deoxy-L-arabinose arabinosyl transferase 1 from Pseudomonas fluorescens (strain ATCC BAA-477 / NRRL B-23932 / Pf-5).